Consider the following 473-residue polypeptide: Aspartyl/glutamyl-tRNA(Asn/Gln) amidotransferase subunit B (473 aa).

This sequence belongs to the GatB/GatE family. GatB subfamily. Heterotrimer of A, B and C subunits.

The enzyme catalyses L-glutamyl-tRNA(Gln) + L-glutamine + ATP + H2O = L-glutaminyl-tRNA(Gln) + L-glutamate + ADP + phosphate + H(+). It catalyses the reaction L-aspartyl-tRNA(Asn) + L-glutamine + ATP + H2O = L-asparaginyl-tRNA(Asn) + L-glutamate + ADP + phosphate + 2 H(+). In terms of biological role, allows the formation of correctly charged Asn-tRNA(Asn) or Gln-tRNA(Gln) through the transamidation of misacylated Asp-tRNA(Asn) or Glu-tRNA(Gln) in organisms which lack either or both of asparaginyl-tRNA or glutaminyl-tRNA synthetases. The reaction takes place in the presence of glutamine and ATP through an activated phospho-Asp-tRNA(Asn) or phospho-Glu-tRNA(Gln). In Francisella tularensis subsp. novicida (strain U112), this protein is Aspartyl/glutamyl-tRNA(Asn/Gln) amidotransferase subunit B.